We begin with the raw amino-acid sequence, 180 residues long: MVRESIPKEGENIKIQSYKHDGKIHRVWSETTILKGTDHVVIGGNDHTLVTESDGRTWITREPAIVYFHSEYWFNVICMFREDGIYYYCNLSSPFVCDEEALKYIDYDLDIKVYPNGKYHLLDEDEYEQHMNQMNYPHDIDIILRRNVDILQQWIEQKKGPFAPDFIKVWKDRYKKIRQY.

Catalysis depends on Arg-26, which acts as the Proton donor. Mg(2+) contacts are provided by Asn-90, Asp-106, Asp-108, Asp-110, Asp-123, and Glu-126.

Belongs to the Ntdp family. The cofactor is Mg(2+).

It carries out the reaction a ribonucleoside 5'-triphosphate + H2O = a ribonucleoside 5'-diphosphate + phosphate + H(+). The enzyme catalyses a ribonucleoside 5'-diphosphate + H2O = a ribonucleoside 5'-phosphate + phosphate + H(+). Its function is as follows. Has nucleoside phosphatase activity towards nucleoside triphosphates and nucleoside diphosphates. This is Nucleoside triphosphate/diphosphate phosphatase from Staphylococcus aureus (strain MRSA252).